A 103-amino-acid polypeptide reads, in one-letter code: Large ribosomal subunit protein bL21 (103 aa).

The protein belongs to the bacterial ribosomal protein bL21 family. In terms of assembly, part of the 50S ribosomal subunit. Contacts protein L20.

This protein binds to 23S rRNA in the presence of protein L20. This Acinetobacter baylyi (strain ATCC 33305 / BD413 / ADP1) protein is Large ribosomal subunit protein bL21.